Consider the following 261-residue polypeptide: Monensin polyketide synthase putative ketoacyl reductase (261 aa).

10-34 (LVTGATSGIGLATARLLAAQGHLVF) serves as a coordination point for NAD(+). Substrate is bound at residue Ser-144. The Proton acceptor role is filled by Tyr-157.

This sequence belongs to the short-chain dehydrogenases/reductases (SDR) family.

It participates in antifungal biosynthesis; monensin biosynthesis. The sequence is that of Monensin polyketide synthase putative ketoacyl reductase from Streptomyces virginiae (Streptomyces cinnamonensis).